Here is a 258-residue protein sequence, read N- to C-terminus: E3 ubiquitin ligase TRIM40 (258 aa).

An RING-type zinc finger spans residues 14–56 (CPICQESLKEAVSTNCGHLFCRVCLTQHVEKASASGVFCCPLC). A B box-type zinc finger spans residues 66–107 (GTGYICPNHQKRVCRFCEESRLLLCVECLVSPEHMSHHELTI). 4 residues coordinate Zn(2+): cysteine 71, histidine 74, cysteine 93, and histidine 99. A coiled-coil region spans residues 107-159 (IENALSHYKERLNRRSRKLRKDIAELQRLKAQQEKKLQALQFQVDHGNHRLEA).

It belongs to the TRIM/RBCC family. As to quaternary structure, interacts with NEDD8. Highly expressed in normal gastrointestinal epithelia but that is down-regulated in gastrointestinal carcinomas and chronic inflammatory lesions of the gastrointestinal tract.

The enzyme catalyses S-ubiquitinyl-[E2 ubiquitin-conjugating enzyme]-L-cysteine + [acceptor protein]-L-lysine = [E2 ubiquitin-conjugating enzyme]-L-cysteine + N(6)-ubiquitinyl-[acceptor protein]-L-lysine.. Functionally, E3 ubiquitin-protein ligase that plays a role in the limitation of the innate immune response. Mediates inhibition of the RLR signaling pathway by ubiquitinating RIGI and IFIH1 receptors, leading to their proteasomal degradation. Also promotes the neddylation of IKBKG/NEMO, stabilizing NFKBIA, and thereby inhibiting of NF-kappa-B nuclear translocation and activation. The polypeptide is E3 ubiquitin ligase TRIM40 (TRIM40) (Homo sapiens (Human)).